Reading from the N-terminus, the 393-residue chain is Formate-dependent phosphoribosylglycinamide formyltransferase (393 aa).

N(1)-(5-phospho-beta-D-ribosyl)glycinamide is bound by residues 22–23 and glutamate 82; that span reads EL. ATP-binding positions include arginine 114, lysine 155, 160 to 165, 195 to 198, and glutamate 203; these read SSGHGQ and EGFI. Residues 119 to 308 form the ATP-grasp domain; the sequence is RLAAEELGLP…QFALHARAIL (190 aa). Mg(2+)-binding residues include glutamate 267 and glutamate 279. Residues aspartate 286, lysine 356, and 363 to 364 each bind N(1)-(5-phospho-beta-D-ribosyl)glycinamide; that span reads RR.

It belongs to the PurK/PurT family. Homodimer.

The enzyme catalyses N(1)-(5-phospho-beta-D-ribosyl)glycinamide + formate + ATP = N(2)-formyl-N(1)-(5-phospho-beta-D-ribosyl)glycinamide + ADP + phosphate + H(+). The protein operates within purine metabolism; IMP biosynthesis via de novo pathway; N(2)-formyl-N(1)-(5-phospho-D-ribosyl)glycinamide from N(1)-(5-phospho-D-ribosyl)glycinamide (formate route): step 1/1. Functionally, involved in the de novo purine biosynthesis. Catalyzes the transfer of formate to 5-phospho-ribosyl-glycinamide (GAR), producing 5-phospho-ribosyl-N-formylglycinamide (FGAR). Formate is provided by PurU via hydrolysis of 10-formyl-tetrahydrofolate. This is Formate-dependent phosphoribosylglycinamide formyltransferase from Haemophilus ducreyi (strain 35000HP / ATCC 700724).